A 432-amino-acid polypeptide reads, in one-letter code: Pachytene checkpoint protein 2 homolog (432 aa).

Position 1 is an N-acetylmethionine (Met1). 179 to 186 (GPPGTGKT) provides a ligand contact to ATP.

Belongs to the AAA ATPase family. PCH2 subfamily. Specifically interacts with the ligand binding domain of the thyroid receptor (TR). This interaction does not require the presence of thyroid hormone for its interaction. Interacts with proteasome subunit PSMA8; to participate in meiosis progression during spermatogenesis. In terms of tissue distribution, widely expressed, including in testis.

Its function is as follows. Plays a key role in chromosome recombination and chromosome structure development during meiosis. Required at early steps in meiotic recombination that leads to non-crossovers pathways. Also needed for efficient completion of homologous synapsis by influencing crossover distribution along the chromosomes affecting both crossovers and non-crossovers pathways. Also required for development of higher-order chromosome structures and is needed for synaptonemal-complex formation. In males, required for efficient synapsis of the sex chromosomes and for sex body formation. Promotes early steps of the DNA double-strand breaks (DSBs) repair process upstream of the assembly of RAD51 complexes. Required for depletion of HORMAD1 and HORMAD2 from synapsed chromosomes. Plays a role in mitotic spindle assembly checkpoint (SAC) activation. This is Pachytene checkpoint protein 2 homolog (Trip13) from Mus musculus (Mouse).